Here is a 460-residue protein sequence, read N- to C-terminus: tRNA modification GTPase MnmE (460 aa).

Positions 29, 91, and 132 each coordinate (6S)-5-formyl-5,6,7,8-tetrahydrofolate. The 157-residue stretch at 227 to 383 (GISIALIGKT…LIDTIIKKCG (157 aa)) folds into the TrmE-type G domain. Asn-237 is a binding site for K(+). GTP is bound by residues 237-242 (NVGKSS), 256-262 (TNIPGTT), and 281-284 (DTAG). Ser-241 lines the Mg(2+) pocket. Thr-256, Ile-258, and Thr-261 together coordinate K(+). Residue Thr-262 participates in Mg(2+) binding. Lys-460 contributes to the (6S)-5-formyl-5,6,7,8-tetrahydrofolate binding site.

It belongs to the TRAFAC class TrmE-Era-EngA-EngB-Septin-like GTPase superfamily. TrmE GTPase family. Homodimer. Heterotetramer of two MnmE and two MnmG subunits. K(+) serves as cofactor.

The protein resides in the cytoplasm. In terms of biological role, exhibits a very high intrinsic GTPase hydrolysis rate. Involved in the addition of a carboxymethylaminomethyl (cmnm) group at the wobble position (U34) of certain tRNAs, forming tRNA-cmnm(5)s(2)U34. In Prochlorococcus marinus (strain MIT 9215), this protein is tRNA modification GTPase MnmE.